Consider the following 212-residue polypeptide: Pyridoxine/pyridoxamine 5'-phosphate oxidase (212 aa).

Residues 8–11 and lysine 66 contribute to the substrate site; that span reads RREY. FMN is bound by residues 61–66, 76–77, arginine 82, lysine 83, and glutamine 105; these read RIVLLK and FT. Tyrosine 123, arginine 127, and serine 131 together coordinate substrate. FMN-binding positions include 140–141 and tryptophan 185; that span reads QS. 191 to 193 contacts substrate; sequence RLH. Arginine 195 is a binding site for FMN.

The protein belongs to the pyridoxamine 5'-phosphate oxidase family. In terms of assembly, homodimer. FMN is required as a cofactor.

It catalyses the reaction pyridoxamine 5'-phosphate + O2 + H2O = pyridoxal 5'-phosphate + H2O2 + NH4(+). The catalysed reaction is pyridoxine 5'-phosphate + O2 = pyridoxal 5'-phosphate + H2O2. Its pathway is cofactor metabolism; pyridoxal 5'-phosphate salvage; pyridoxal 5'-phosphate from pyridoxamine 5'-phosphate: step 1/1. The protein operates within cofactor metabolism; pyridoxal 5'-phosphate salvage; pyridoxal 5'-phosphate from pyridoxine 5'-phosphate: step 1/1. In terms of biological role, catalyzes the oxidation of either pyridoxine 5'-phosphate (PNP) or pyridoxamine 5'-phosphate (PMP) into pyridoxal 5'-phosphate (PLP). The protein is Pyridoxine/pyridoxamine 5'-phosphate oxidase of Shewanella sp. (strain W3-18-1).